Here is a 532-residue protein sequence, read N- to C-terminus: uncharacterized protein (532 aa).

The next 13 helical transmembrane spans lie at 13–33 (MSLL…QTLL), 53–73 (WLTT…AFLI), 80–100 (SLFL…GIAP), 111–131 (IQAV…LLIF), 142–162 (IFGL…GWII), 169–189 (IMFY…FFIF), 203–223 (LGAI…SEAG), 231–251 (IVLS…VQQL), 273–293 (VINI…PIYL), 306–326 (LLLL…GILF), 334–354 (LAII…QLTI), 361–381 (IMLI…PVMT), and 483–503 (INDA…LSIF).

It belongs to the major facilitator superfamily. EmrB family.

It localises to the cell membrane. This is an uncharacterized protein from Bacillus subtilis (strain 168).